The following is a 184-amino-acid chain: Photosystem I assembly protein Ycf4 (184 aa).

2 helical membrane passes run 21-43 and 63-85; these read NYFWATVVFLGSLGFFIVGVSSY and GIVMCFYGIAGLFLSFYLWFTIF.

The protein belongs to the Ycf4 family.

Its subcellular location is the plastid. It localises to the chloroplast thylakoid membrane. In terms of biological role, seems to be required for the assembly of the photosystem I complex. In Chaetosphaeridium globosum (Charophycean green alga), this protein is Photosystem I assembly protein Ycf4.